A 566-amino-acid polypeptide reads, in one-letter code: Cyclin G (566 aa).

The Cyclin N-terminal domain occupies 285 to 368 (MWYELPSDVL…VIANKLGVQM (84 aa)).

Belongs to the cyclin family. Cyclin G subfamily. As to quaternary structure, interacts with corto. Interacts with the cyclin-dependent kinases Cdk2 and Cdk4. Interacts with Brca2 and Rad9. Interacts with polycomb protein Asx. Interacts with protein phosphatase 2A subunit wdb.

It is found in the chromosome. Cyclin with roles in multiple processes including transcription, meiotic recombination repair, cell cycle regulation, and promotion of normal growth and metabolism. Binds to the promoter region of the homeobox gene Abd-B and is involved in maintaining Abd-B expression in the pupal epithelium. Involved in the transcriptional repression of the homeotic genes Scr and Ubx. Plays a role in meiotic recombination repair of DNA double-strand breaks which ensures efficient translation of grk and promotes grk activity in the oocyte, leading to oocyte dorso-ventral axis formation following secretion of grk from the oocyte and its binding to Egfr in the directly overlying follicle cells. Negatively regulates the binding of serine/threonine-protein kinase Akt1 to the protein phosphatase 2A subunit wdb, promoting normal growth and metabolism. Required for the formation of bilateral symmetry. Negatively regulates cell cycle progression by preventing G1 to S transition and retarding S-phase progression. In Drosophila melanogaster (Fruit fly), this protein is Cyclin G.